Reading from the N-terminus, the 294-residue chain is Homoserine kinase (294 aa).

Residue 84–94 (PFSRGLGSSSA) coordinates ATP.

It belongs to the GHMP kinase family. Homoserine kinase subfamily.

The protein resides in the cytoplasm. The catalysed reaction is L-homoserine + ATP = O-phospho-L-homoserine + ADP + H(+). It participates in amino-acid biosynthesis; L-threonine biosynthesis; L-threonine from L-aspartate: step 4/5. Its function is as follows. Catalyzes the ATP-dependent phosphorylation of L-homoserine to L-homoserine phosphate. The polypeptide is Homoserine kinase (Campylobacter concisus (strain 13826)).